Consider the following 136-residue polypeptide: Nucleoside diphosphate kinase (136 aa).

Residues Lys10, Phe58, Arg86, Thr92, Arg104, and Asn114 each contribute to the ATP site. His117 (pros-phosphohistidine intermediate) is an active-site residue.

The protein belongs to the NDK family. In terms of assembly, homotetramer. Requires Mg(2+) as cofactor.

It is found in the cytoplasm. It carries out the reaction a 2'-deoxyribonucleoside 5'-diphosphate + ATP = a 2'-deoxyribonucleoside 5'-triphosphate + ADP. The enzyme catalyses a ribonucleoside 5'-diphosphate + ATP = a ribonucleoside 5'-triphosphate + ADP. Its function is as follows. Major role in the synthesis of nucleoside triphosphates other than ATP. The ATP gamma phosphate is transferred to the NDP beta phosphate via a ping-pong mechanism, using a phosphorylated active-site intermediate. In Mycobacterium avium (strain 104), this protein is Nucleoside diphosphate kinase.